A 508-amino-acid chain; its full sequence is Photosystem II CP47 reaction center protein (508 aa).

6 helical membrane passes run 21-36 (AVHL…WAGS), 101-115 (ITLS…IWHW), 140-156 (GIHL…FGAF), 203-218 (IAAG…FHLS), 237-252 (VLSS…AFVV), and 457-472 (TFAL…HGAR).

It belongs to the PsbB/PsbC family. PsbB subfamily. As to quaternary structure, PSII is composed of 1 copy each of membrane proteins PsbA, PsbB, PsbC, PsbD, PsbE, PsbF, PsbH, PsbI, PsbJ, PsbK, PsbL, PsbM, PsbT, PsbX, PsbY, PsbZ, Psb30/Ycf12, at least 3 peripheral proteins of the oxygen-evolving complex and a large number of cofactors. It forms dimeric complexes. Requires Binds multiple chlorophylls. PSII binds additional chlorophylls, carotenoids and specific lipids. as cofactor.

It is found in the plastid. Its subcellular location is the chloroplast thylakoid membrane. Functionally, one of the components of the core complex of photosystem II (PSII). It binds chlorophyll and helps catalyze the primary light-induced photochemical processes of PSII. PSII is a light-driven water:plastoquinone oxidoreductase, using light energy to abstract electrons from H(2)O, generating O(2) and a proton gradient subsequently used for ATP formation. The polypeptide is Photosystem II CP47 reaction center protein (Psilotum nudum (Whisk fern)).